The following is a 724-amino-acid chain: Phenylalanine ammonia-lyase (724 aa).

The active-site Proton donor/acceptor is the Y91. A cross-link (5-imidazolinone (Ala-Gly)) is located at residues 205–207; that stretch reads ASG. 2,3-didehydroalanine (Ser) is present on S206. The (E)-cinnamate site is built by N265, Q357, R363, N393, K467, E495, and N498.

This sequence belongs to the PAL/histidase family. In terms of assembly, homotetramer. Post-translationally, contains an active site 4-methylidene-imidazol-5-one (MIO), which is formed autocatalytically by cyclization and dehydration of residues Ala-Ser-Gly.

It localises to the cytoplasm. It carries out the reaction L-phenylalanine = (E)-cinnamate + NH4(+). It participates in phenylpropanoid metabolism; trans-cinnamate biosynthesis; trans-cinnamate from L-phenylalanine: step 1/1. Catalyzes the non-oxidative deamination of L-phenylalanine to form trans-cinnamic acid and a free ammonium ion. Facilitates the commitment step in phenylpropanoid pathways that produce secondary metabolites such as lignins, coumarins and flavonoids. This is Phenylalanine ammonia-lyase (PAL1) from Mycosarcoma maydis (Corn smut fungus).